The chain runs to 190 residues: Surfactant protein C (190 aa).

Positions 1–24 are excised as a propeptide; the sequence is MDVGSKEVLMESPPDYTAVPGGRL. 2 S-palmitoyl cysteine lipidation sites follow: C28 and C29. Positions 59–190 are excised as a propeptide; sequence HMSQKHTEMV…LCGEVPLYYT (132 aa). In terms of domain architecture, BRICHOS spans 94 to 190; the sequence is FSIGSTGTVV…LCGEVPLYYT (97 aa). Cysteines 121 and 182 form a disulfide.

It is found in the secreted. It localises to the extracellular space. Its subcellular location is the surface film. Pulmonary surfactant associated proteins promote alveolar stability by lowering the surface tension at the air-liquid interface in the peripheral air spaces. The polypeptide is Surfactant protein C (SFTPC) (Bos taurus (Bovine)).